We begin with the raw amino-acid sequence, 140 residues long: Histone H3-like centromeric protein A (140 aa).

Residues 1–46 (MGPRRRSRKPEAPRRRSPSPTPTPGPSRRGPSLGASSHQHSRRRQG) form a disordered region. N,N,N-trimethylglycine is present on G2. S7 is modified (phosphoserine; by AURKA and AURKB). Phosphoserine is present on residues S17, S19, and S27. The segment covering 26-37 (PSRRGPSLGASS) has biased composition (low complexity). Residues 39–54 (QHSRRRQGWLKEIRKL) form an important for flexibility of DNA ends that protrude from nucleosomes region. S68 carries the post-translational modification Phosphoserine. Residues 75-116 (CVKFTRGVDFNWQAQALLALQEAAEAFLVHLFEDAYLLTLHA) form a CATD region.

This sequence belongs to the histone H3 family. In terms of assembly, component of centromeric nucleosomes, where DNA is wrapped around a histone octamer core. The octamer contains two molecules each of H2A, H2B, CENPA and H4 assembled in one CENPA-H4 heterotetramer and two H2A-H2B heterodimers. CENPA modulates the DNA-binding characteristics of nucleosomes so that protruding DNA ends have higher flexibility than in nucleosomes containing conventional histone H3. Inhibits binding of histone H1 to nucleosomes, since histone H1 binds preferentially to rigid DNA linkers that protrude from nucleosomes. Nucleosomes containing CENPA also contain histone H2A variants such as MACROH2A and H2A.Z/H2AZ1. The CENPA-H4 heterotetramer is more compact and structurally more rigid than corresponding H3-H4 heterotetramers. Can assemble into nucleosomes that contain both CENPA and histone H3.3; these nucleosomes interact with a single CENPC chain. Heterotrimer composed of HJURP, CENPA and histone H4, where HJURP interacts with the dimer formed by CENPA and histone H4 and prevents tetramerization of CENPA and H4. Component of the CENPA-NAC complex, at least composed of CENPA, CENPC, CENPH, CENPM, CENPN, CENPT and CENPU. Interacts (via CATD domain) with HJURP; the interaction is direct and is required for its localization to centromeres. Interacts with CENPC, CENPN and CENPT; interaction is direct. Part of a centromere complex consisting of CENPA, CENPT and CENPW. Identified in centromere complexes containing histones H2A, H2B and H4, and at least CENPA, CENPB, CENPC, CENPT, CENPN, HJURP, SUPT16H, SSRP1 and RSF1. Can self-associate. The CENPA-H4 heterotetramer can bind DNA by itself (in vitro). Interacts with CDK1, PPP1CA and RBBP7. (Microbial infection) Interacts directly with herpes virus HHV-1 protein ICP0. Ubiquitinated. Interaction with herpes virus HSV-1 ICP0 protein, leads to its degradation by the proteasome pathway. Post-translationally, trimethylated by NTMT1 at the N-terminal glycine after cleavage of Met-1. Methylation is low before incorporation into nucleosomes and increases with cell cycle progression, with the highest levels in mitotic nucleosomes. In terms of processing, phosphorylated by CDK1 at Ser-68 during early mitosis; this abolishes association with chromatin and centromeres, prevents interaction with HJURP and thereby prevents premature assembly of CENPA into centromeres. Dephosphorylated at Ser-68 by PPP1CA during late mitosis. Phosphorylation of Ser-7 by AURKA and AURKB during prophase is required for localization of AURKA and AURKB at inner centromere and is essential for normal cytokinesis. Initial phosphorylation during prophase is mediated by AURKA and is maintained by AURKB. Poly-ADP-ribosylated by PARP1.

It localises to the nucleus. It is found in the chromosome. Its subcellular location is the centromere. Its function is as follows. Histone H3-like nucleosomal protein that is specifically found in centromeric nucleosomes. Replaces conventional H3 in the nucleosome core of centromeric chromatin that serves as an assembly site for the inner kinetochore. The presence of CENPA subtly modifies the nucleosome structure and the way DNA is wrapped around the nucleosome and gives rise to protruding DNA ends that are less well-ordered and rigid compared to nucleosomes containing histone H3. May serve as an epigenetic mark that propagates centromere identity through replication and cell division. Required for recruitment and assembly of kinetochore proteins, and as a consequence required for progress through mitosis, chromosome segregation and cytokinesis. This Homo sapiens (Human) protein is Histone H3-like centromeric protein A (CENPA).